An 819-amino-acid chain; its full sequence is Metabotropic glutamate receptor-like protein O (819 aa).

An N-terminal signal peptide occupies residues 1–19 (MKKVFFLILILNCVVGALS). The Extracellular portion of the chain corresponds to 20 to 394 (NKNICKISLL…FVDSYSNSIK (375 aa)). 6 N-linked (GlcNAc...) asparagine glycosylation sites follow: Asn-99, Asn-185, Asn-277, Asn-295, Asn-330, and Asn-370. A helical membrane pass occupies residues 395–415 (ISILSVSIFCIFICVLGMIFI). Residues 416–428 (TVLRNARILKSSS) are Cytoplasmic-facing. Residues 429–449 (PSFLLLILFGCIVIFTGCILF) form a helical membrane-spanning segment. The Extracellular portion of the chain corresponds to 450 to 457 (SQPATDKT). The helical transmembrane segment at 458 to 478 (CQGRVWLLSIGYTIFLGSLLI) threads the bilayer. Over 479-503 (KNWRVWLLFDNKKLRKRSITNWKLY) the chain is Cytoplasmic. Residues 504-524 (PWVAGILVVDVLILALWQGLG) form a helical membrane-spanning segment. The Extracellular segment spans residues 525–550 (DIKSESRIIGTSFYQYTNVCTNNDQG). Residues 551-571 (SIALYILLAFHGLKLLGTCFI) traverse the membrane as a helical segment. The Cytoplasmic portion of the chain corresponds to 572–587 (SFKIKLVDIEEFNESK). The helical transmembrane segment at 588–608 (PITTSVFIILFCIFTIILLIA) threads the bilayer. The Extracellular portion of the chain corresponds to 609–624 (PSSSSSSASSPQPIAS). The helical transmembrane segment at 625-645 (LETIICICSVTTTAISIGLLF) threads the bilayer. The Cytoplasmic segment spans residues 646-819 (GDKIYFITTQ…NNENEIISDT (174 aa)). The interval 674–819 (KDCDDDDDDS…NNENEIISDT (146 aa)) is disordered. Residues 695–712 (NKNKNKNRNQSEKKKRPN) show a composition bias toward basic residues. Residues 726-739 (ESVVFNPPSNNDLT) show a composition bias toward polar residues. A compositionally biased stretch (basic and acidic residues) spans 748–768 (GIKEGHGHDSENNDEYEHHED). Acidic residues predominate over residues 769 to 798 (EDHEYEGEGEDEDHEDEYEVENDIEQEQEQ). The segment covering 799 to 808 (ESSNISISTK) has biased composition (low complexity).

The protein in the N-terminal section; belongs to the BMP lipoprotein family. In the C-terminal section; belongs to the G-protein coupled receptor 3 family. GABA-B receptor subfamily.

The protein localises to the membrane. The chain is Metabotropic glutamate receptor-like protein O (grlO) from Dictyostelium discoideum (Social amoeba).